A 229-amino-acid chain; its full sequence is Flagellar L-ring protein 1 (229 aa).

An N-terminal signal peptide occupies residues 1 to 18 (MYLRKISAPLMTMLLLNG). The N-palmitoyl cysteine moiety is linked to residue cysteine 19. A lipid anchor (S-diacylglycerol cysteine) is attached at cysteine 19.

It belongs to the FlgH family. The basal body constitutes a major portion of the flagellar organelle and consists of four rings (L,P,S, and M) mounted on a central rod.

It is found in the cell outer membrane. The protein resides in the bacterial flagellum basal body. In terms of biological role, assembles around the rod to form the L-ring and probably protects the motor/basal body from shearing forces during rotation. The protein is Flagellar L-ring protein 1 (flgH1) of Yersinia pseudotuberculosis serotype I (strain IP32953).